The following is a 102-amino-acid chain: Small ribosomal subunit protein uS10 (102 aa).

It belongs to the universal ribosomal protein uS10 family. Part of the 30S ribosomal subunit.

Functionally, involved in the binding of tRNA to the ribosomes. This Pseudothermotoga lettingae (strain ATCC BAA-301 / DSM 14385 / NBRC 107922 / TMO) (Thermotoga lettingae) protein is Small ribosomal subunit protein uS10.